The sequence spans 137 residues: ATP synthase epsilon chain (137 aa).

This sequence belongs to the ATPase epsilon chain family. As to quaternary structure, F-type ATPases have 2 components, CF(1) - the catalytic core - and CF(0) - the membrane proton channel. CF(1) has five subunits: alpha(3), beta(3), gamma(1), delta(1), epsilon(1). CF(0) has three main subunits: a, b and c.

Its subcellular location is the cell membrane. Its function is as follows. Produces ATP from ADP in the presence of a proton gradient across the membrane. In Mycoplasmopsis synoviae (strain 53) (Mycoplasma synoviae), this protein is ATP synthase epsilon chain.